A 660-amino-acid chain; its full sequence is Translation factor GUF1 homolog, mitochondrial (660 aa).

A tr-type G domain is found at 62–243 (EKIRNFSIIA…TIIEKIPPPT (182 aa)). Residues 71–78 (AHIDHGKS), 136–140 (DTPGH), and 190–193 (NKID) each bind GTP.

This sequence belongs to the TRAFAC class translation factor GTPase superfamily. Classic translation factor GTPase family. LepA subfamily.

The protein localises to the mitochondrion inner membrane. The catalysed reaction is GTP + H2O = GDP + phosphate + H(+). Promotes mitochondrial protein synthesis. May act as a fidelity factor of the translation reaction, by catalyzing a one-codon backward translocation of tRNAs on improperly translocated ribosomes. Binds to mitochondrial ribosomes in a GTP-dependent manner. The protein is Translation factor GUF1 homolog, mitochondrial of Trichoplax adhaerens (Trichoplax reptans).